Reading from the N-terminus, the 776-residue chain is Kinesin-like protein KLP1 (776 aa).

One can recognise a Kinesin motor domain in the interval 5 to 335; that stretch reads AVKVFVRTRP…LRFASRVRTL (331 aa). An ATP-binding site is contributed by 91–98; it reads GQTGAGKT. A coiled-coil region spans residues 348-371; the sequence is ALLLRRYERQIKELKAELAMRDTL. The disordered stretch occupies residues 441 to 535; it reads RRATEEGSGA…SNWGDAGPLS (95 aa). Over residues 447 to 460 the composition is skewed to low complexity; that stretch reads GSGAAARGGDSAGP. Residues 579 to 657 adopt a coiled-coil conformation; it reads ALADTKASIR…SLKSAREELE (79 aa). The globular stretch occupies residues 658–776; sequence PQIQAVAVAR…TQAVNRGLAR (119 aa).

Belongs to the TRAFAC class myosin-kinesin ATPase superfamily. Kinesin family.

It is found in the cytoplasm. The protein resides in the cytoskeleton. The protein localises to the flagellum axoneme. Functionally, may play a role in rotation or twisting of the central pair microtubules of the flagella axoneme. The polypeptide is Kinesin-like protein KLP1 (KLP1) (Chlamydomonas reinhardtii (Chlamydomonas smithii)).